Here is a 158-residue protein sequence, read N- to C-terminus: S-ribosylhomocysteine lyase (158 aa).

Fe cation is bound by residues H56, H60, and C125.

The protein belongs to the LuxS family. In terms of assembly, homodimer. Fe cation serves as cofactor.

It carries out the reaction S-(5-deoxy-D-ribos-5-yl)-L-homocysteine = (S)-4,5-dihydroxypentane-2,3-dione + L-homocysteine. In terms of biological role, involved in the synthesis of autoinducer 2 (AI-2) which is secreted by bacteria and is used to communicate both the cell density and the metabolic potential of the environment. The regulation of gene expression in response to changes in cell density is called quorum sensing. Catalyzes the transformation of S-ribosylhomocysteine (RHC) to homocysteine (HC) and 4,5-dihydroxy-2,3-pentadione (DPD). This Leuconostoc mesenteroides subsp. mesenteroides (strain ATCC 8293 / DSM 20343 / BCRC 11652 / CCM 1803 / JCM 6124 / NCDO 523 / NBRC 100496 / NCIMB 8023 / NCTC 12954 / NRRL B-1118 / 37Y) protein is S-ribosylhomocysteine lyase.